A 503-amino-acid polypeptide reads, in one-letter code: Zinc finger and BTB domain-containing protein 37 (503 aa).

The BTB domain maps to 32-96; that stretch reads CDIVVNVQGQ…CYTGRICLQL (65 aa). Disordered regions lie at residues 140-206 and 280-344; these read QTRT…SDVE and GHGS…QVEE. Residues 144–154 show a composition bias toward basic and acidic residues; the sequence is KHQERPPESHR. Residues 155 to 167 show a composition bias toward polar residues; that stretch reads VTPNLNRSLSPRH. Basic and acidic residues predominate over residues 319–336; the sequence is TERHRARSESPGRMDEPK. C2H2-type zinc fingers lie at residues 373 to 395, 401 to 423, and 429 to 452; these read LTCI…MRLH, FVCR…IRKH, and FHCH…RKNH. The segment at 457–503 is disordered; it reads PLEGPHSISPETTVTSRGQAEEESPSQEETVAPGEAVQGSVSTTGPD. A compositionally biased stretch (polar residues) spans 465-474; the sequence is SPETTVTSRG.

It is found in the nucleus. May be involved in transcriptional regulation. The chain is Zinc finger and BTB domain-containing protein 37 (ZBTB37) from Homo sapiens (Human).